The primary structure comprises 335 residues: Pyridoxal 5'-phosphate synthase subunit PdxS (335 aa).

D59 is a D-ribose 5-phosphate binding site. K116 acts as the Schiff-base intermediate with D-ribose 5-phosphate in catalysis. G188 contacts D-ribose 5-phosphate. K200 lines the D-glyceraldehyde 3-phosphate pocket. Residues G253 and 274-275 (GS) contribute to the D-ribose 5-phosphate site.

This sequence belongs to the PdxS/SNZ family. As to quaternary structure, in the presence of PdxT, forms a dodecamer of heterodimers.

It catalyses the reaction aldehydo-D-ribose 5-phosphate + D-glyceraldehyde 3-phosphate + L-glutamine = pyridoxal 5'-phosphate + L-glutamate + phosphate + 3 H2O + H(+). It functions in the pathway cofactor biosynthesis; pyridoxal 5'-phosphate biosynthesis. Functionally, catalyzes the formation of pyridoxal 5'-phosphate from ribose 5-phosphate (RBP), glyceraldehyde 3-phosphate (G3P) and ammonia. The ammonia is provided by the PdxT subunit. Can also use ribulose 5-phosphate and dihydroxyacetone phosphate as substrates, resulting from enzyme-catalyzed isomerization of RBP and G3P, respectively. The chain is Pyridoxal 5'-phosphate synthase subunit PdxS from Hyperthermus butylicus (strain DSM 5456 / JCM 9403 / PLM1-5).